A 278-amino-acid polypeptide reads, in one-letter code: Shikimate dehydrogenase (NADP(+)) (278 aa).

Residues 15–17 (SMS) and T62 contribute to the shikimate site. K66 functions as the Proton acceptor in the catalytic mechanism. Position 78 (E78) interacts with NADP(+). Positions 87 and 102 each coordinate shikimate. NADP(+) contacts are provided by residues 127–131 (GAGGA), 151–156 (NRTPEK), and I217. Y219 provides a ligand contact to shikimate. G240 serves as a coordination point for NADP(+).

Belongs to the shikimate dehydrogenase family. In terms of assembly, homodimer.

The enzyme catalyses shikimate + NADP(+) = 3-dehydroshikimate + NADPH + H(+). It functions in the pathway metabolic intermediate biosynthesis; chorismate biosynthesis; chorismate from D-erythrose 4-phosphate and phosphoenolpyruvate: step 4/7. Involved in the biosynthesis of the chorismate, which leads to the biosynthesis of aromatic amino acids. Catalyzes the reversible NADPH linked reduction of 3-dehydroshikimate (DHSA) to yield shikimate (SA). This Bacillus licheniformis (strain ATCC 14580 / DSM 13 / JCM 2505 / CCUG 7422 / NBRC 12200 / NCIMB 9375 / NCTC 10341 / NRRL NRS-1264 / Gibson 46) protein is Shikimate dehydrogenase (NADP(+)).